We begin with the raw amino-acid sequence, 1096 residues long: Adenylate-forming reductase Nps9 (1096 aa).

Residues 39–352 form an adenylation (A) domain region; the sequence is DDTLTEISFL…TTEFGAPTQL (314 aa). Residues His236, 339–340, Thr344, and 425–428 each bind AMP; these read VQ and IIGR. The region spanning 569 to 656 is the Carrier domain; the sequence is EWTVSTLEHW…LLADRVAKIA (88 aa). Ser605 is subject to O-(pantetheine 4'-phosphoryl)serine. The tract at residues 716–952 is reductase (R) domain; sequence LTGSTGGLGS…MPAEKVSAAI (237 aa). NADP(+)-binding positions include 720-723, 807-809, Tyr880, and Lys884; these read TGGL and SAW.

It belongs to the adenylate-forming reductase family.

Adenylate-forming reductase, a natural product biosynthesis enzyme that resembles non-ribosomal peptide synthetases, yet serves to modify one substrate, rather than to condense two or more building blocks. The A-domain preferentially accepts L-threonine as substrate. The natural product of the enzyme is not yet known. This chain is Adenylate-forming reductase Nps9, found in Serpula lacrymans var. lacrymans (strain S7.9) (Dry rot fungus).